Reading from the N-terminus, the 181-residue chain is Ribonuclease HII (181 aa).

The 181-residue stretch at 1-181 (MICGIDEVGR…SLHRKNFKLI (181 aa)) folds into the RNase H type-2 domain. Residues Asp6, Glu7, and Asp98 each coordinate a divalent metal cation.

It belongs to the RNase HII family. It depends on Mn(2+) as a cofactor. Requires Mg(2+) as cofactor.

The protein resides in the cytoplasm. It catalyses the reaction Endonucleolytic cleavage to 5'-phosphomonoester.. Its function is as follows. Endonuclease that specifically degrades the RNA of RNA-DNA hybrids. The protein is Ribonuclease HII of Borreliella burgdorferi (strain ZS7) (Borrelia burgdorferi).